The sequence spans 163 residues: Protein MATERNALLY EXPRESSED GENE 5 (163 aa).

Positions 38-117 constitute an RRM domain; that stretch reads STLYIEGLPA…DDVNVSAPAE (80 aa). Cystine bridges form between cysteine 140–cysteine 162 and cysteine 143–cysteine 151.

It belongs to the MEG family. As to expression, ubiquitous.

The protein is Protein MATERNALLY EXPRESSED GENE 5 (MEG5) of Zea mays (Maize).